Reading from the N-terminus, the 210-residue chain is N-(5'-phosphoribosyl)anthranilate isomerase (210 aa).

This sequence belongs to the TrpF family.

The catalysed reaction is N-(5-phospho-beta-D-ribosyl)anthranilate = 1-(2-carboxyphenylamino)-1-deoxy-D-ribulose 5-phosphate. It participates in amino-acid biosynthesis; L-tryptophan biosynthesis; L-tryptophan from chorismate: step 3/5. This Staphylococcus aureus (strain bovine RF122 / ET3-1) protein is N-(5'-phosphoribosyl)anthranilate isomerase.